A 509-amino-acid polypeptide reads, in one-letter code: Diacylglycerol kinase 5 (509 aa).

In terms of domain architecture, DAGKc spans 36 to 187 (TPASPVLVFI…IDNWHILMRM (152 aa)). Basic and acidic residues predominate over residues 439–452 (RSVFDPSTPRHQDG). The tract at residues 439-509 (RSVFDPSTPR…SNVHGWSHVL (71 aa)) is disordered. A compositionally biased stretch (acidic residues) spans 453-467 (AEDYDDNEDDSVAEG). Positions 468 to 489 (EEFRKFGAADTFKIPDEGEHSN) are enriched in basic and acidic residues. Residues 490–500 (KKGRASRRRNS) show a composition bias toward basic residues.

This sequence belongs to the eukaryotic diacylglycerol kinase family. In terms of assembly, monomer.

It carries out the reaction a 1,2-diacyl-sn-glycerol + ATP = a 1,2-diacyl-sn-glycero-3-phosphate + ADP + H(+). In terms of biological role, phosphorylates the second messenger diacylglycerol (DAG) to generate phosphatidic acid (PA), another important signaling molecule. PA is required for plant development and responses to abiotic stress and pathogen attack. May be involved in the accumulation of PA during cold stress. The chain is Diacylglycerol kinase 5 (DGK5) from Arabidopsis thaliana (Mouse-ear cress).